The following is a 117-amino-acid chain: Large ribosomal subunit protein bL20 (117 aa).

The protein belongs to the bacterial ribosomal protein bL20 family.

In terms of biological role, binds directly to 23S ribosomal RNA and is necessary for the in vitro assembly process of the 50S ribosomal subunit. It is not involved in the protein synthesizing functions of that subunit. The chain is Large ribosomal subunit protein bL20 from Neorickettsia sennetsu (strain ATCC VR-367 / Miyayama) (Ehrlichia sennetsu).